The sequence spans 793 residues: Netrin-B (793 aa).

The first 22 residues, 1–22, serve as a signal peptide directing secretion; it reads MVRATGTRMGLLLPIILALAIG. Residues 39-303 enclose the Laminin N-terminal domain; it reads KPRKCLPSFV…NLQDNDSADA (265 aa). Residues N103, N125, and N298 are each glycosylated (N-linked (GlcNAc...) asparagine). A disordered region spans residues 332–378; that stretch reads SVVKRQGKHKGSAYEKHYQSKLAATTPPQQPPKVTPPGKVTPPSTAA. Low complexity predominate over residues 367-378; it reads PPGKVTPPSTAA. Intrachain disulfides connect C405/C414, C407/C461, C463/C472, C475/C495, C498/C507, C500/C525, C528/C537, C540/C558, C561/C573, C563/C580, C582/C591, C594/C608, C649/C738, C652/C740, and C665/C792. Laminin EGF-like domains follow at residues 405 to 497, 498 to 560, and 561 to 610; these read CKCN…ECKM, CQCN…VCKR, and CDCH…PCIK. The interval 420–446 is disordered; the sequence is SGSGTALSDQDDGQDEDTPSAPSLANH. Positions 428–437 are enriched in acidic residues; the sequence is DQDDGQDEDT. Residues 649–792 form the NTR domain; it reads CGKCKASPKK…KRFQRRARKC (144 aa). N746 carries N-linked (GlcNAc...) asparagine glycosylation.

As to quaternary structure, binds to unc-5 and fra receptors. At 24 hr after puparium formation (APF), detected in the most anterior (oldest) L3, L4 and L5 lamina neurons (at protein level). At 48 hr APF, expressed in all L3, L4 and L5 neurons with slightly higher expression in the L3 neurons (at protein level). At the midline of developing CNS and in different subsets of neurons, muscles, and epidermal patches.

It is found in the secreted. Its subcellular location is the extracellular space. It localises to the extracellular matrix. The protein localises to the cytoplasm. The protein resides in the perinuclear region. Its function is as follows. Netrins control guidance of CNS commissural axons and peripheral motor axons. Its association with either fra or unc-5 receptors will lead to axon attraction or repulsion, respectively. While short-range repulsion requires both fra and unc-5 receptors, long-range repulsion only requires unc-5. This is Netrin-B (NetB) from Drosophila melanogaster (Fruit fly).